Reading from the N-terminus, the 154-residue chain is Myoglobin (154 aa).

Residues 2–148 (GLSEAEWQLV…FRKDIAAKYK (147 aa)) form the Globin domain. The residue at position 4 (Ser4) is a Phosphoserine. Nitrite is bound at residue His65. His65 serves as a coordination point for O2. At Thr68 the chain carries Phosphothreonine. Residue His94 participates in heme b binding.

This sequence belongs to the globin family. As to quaternary structure, monomeric.

The protein localises to the cytoplasm. It is found in the sarcoplasm. It carries out the reaction Fe(III)-heme b-[protein] + nitric oxide + H2O = Fe(II)-heme b-[protein] + nitrite + 2 H(+). The enzyme catalyses H2O2 + AH2 = A + 2 H2O. Its function is as follows. Monomeric heme protein which primary function is to store oxygen and facilitate its diffusion within muscle tissues. Reversibly binds oxygen through a pentacoordinated heme iron and enables its timely and efficient release as needed during periods of heightened demand. Depending on the oxidative conditions of tissues and cells, and in addition to its ability to bind oxygen, it also has a nitrite reductase activity whereby it regulates the production of bioactive nitric oxide. Under stress conditions, like hypoxia and anoxia, it also protects cells against reactive oxygen species thanks to its pseudoperoxidase activity. This chain is Myoglobin (MB), found in Ziphius cavirostris (Cuvier's beaked whale).